The sequence spans 184 residues: Ribosome maturation factor RimM (184 aa).

Residues 101–180 (EGEFFYCDLV…KITTHNAKTL (80 aa)) enclose the PRC barrel domain.

This sequence belongs to the RimM family. As to quaternary structure, binds ribosomal protein uS19.

The protein resides in the cytoplasm. Its function is as follows. An accessory protein needed during the final step in the assembly of 30S ribosomal subunit, possibly for assembly of the head region. Essential for efficient processing of 16S rRNA. May be needed both before and after RbfA during the maturation of 16S rRNA. It has affinity for free ribosomal 30S subunits but not for 70S ribosomes. The chain is Ribosome maturation factor RimM from Helicobacter pylori (strain ATCC 700392 / 26695) (Campylobacter pylori).